A 361-amino-acid polypeptide reads, in one-letter code: RLA class I histocompatibility antigen, alpha chain 11/11 (361 aa).

An N-terminal signal peptide occupies residues 1-24 (MGSMAPRTLLLLLAGALTLKDTQA). The segment at 25–114 (GSHSMRYFYT…ALRYYNQSAA (90 aa)) is alpha-1. Residues 25–308 (GSHSMRYFYT…EPPAQPTALI (284 aa)) are Extracellular-facing. A glycan (N-linked (GlcNAc...) asparagine) is linked at N110. The alpha-2 stretch occupies residues 115–206 (GSHTFQTMFG…EMGKETLQRA (92 aa)). 2 disulfide bridges follow: C125-C188 and C227-C283. Residues 207 to 298 (DPPKAHVTHH…GLPEPLTLTW (92 aa)) form an alpha-3 region. The Ig-like C1-type domain maps to 209 to 297 (PKAHVTHHPA…EGLPEPLTLT (89 aa)). A connecting peptide region spans residues 299-308 (EPPAQPTALI). Residues 309–329 (VGIVAGVLGVLLILGAVVAVV) traverse the membrane as a helical segment. Residues 330 to 361 (RRKKHSSDGKGGRYTPAAGGHRDQGSDDSLMP) lie on the Cytoplasmic side of the membrane. The interval 335–361 (SSDGKGGRYTPAAGGHRDQGSDDSLMP) is disordered. A phosphoserine mark is found at S355 and S358.

Belongs to the MHC class I family. In terms of assembly, heterodimer of an alpha chain and a beta chain (beta-2-microglobulin).

The protein localises to the membrane. Functionally, involved in the presentation of foreign antigens to the immune system. The sequence is that of RLA class I histocompatibility antigen, alpha chain 11/11 from Oryctolagus cuniculus (Rabbit).